The sequence spans 339 residues: S-adenosylmethionine:tRNA ribosyltransferase-isomerase (339 aa).

Belongs to the QueA family. In terms of assembly, monomer.

The protein localises to the cytoplasm. It carries out the reaction 7-aminomethyl-7-carbaguanosine(34) in tRNA + S-adenosyl-L-methionine = epoxyqueuosine(34) in tRNA + adenine + L-methionine + 2 H(+). Its pathway is tRNA modification; tRNA-queuosine biosynthesis. Transfers and isomerizes the ribose moiety from AdoMet to the 7-aminomethyl group of 7-deazaguanine (preQ1-tRNA) to give epoxyqueuosine (oQ-tRNA). The chain is S-adenosylmethionine:tRNA ribosyltransferase-isomerase from Campylobacter fetus subsp. fetus (strain 82-40).